A 572-amino-acid polypeptide reads, in one-letter code: Urease subunit alpha (572 aa).

Residues 132-572 (GGFDSHIHFI…LPMAQRYFMY (441 aa)) form the Urease domain. Ni(2+) contacts are provided by His-137, His-139, and Lys-220. N6-carboxylysine is present on Lys-220. His-222 lines the substrate pocket. Positions 249 and 275 each coordinate Ni(2+). His-323 acts as the Proton donor in catalysis. Asp-363 is a Ni(2+) binding site.

It belongs to the metallo-dependent hydrolases superfamily. Urease alpha subunit family. Heterotrimer of UreA (gamma), UreB (beta) and UreC (alpha) subunits. Three heterotrimers associate to form the active enzyme. Ni cation serves as cofactor. In terms of processing, carboxylation allows a single lysine to coordinate two nickel ions.

It localises to the cytoplasm. It catalyses the reaction urea + 2 H2O + H(+) = hydrogencarbonate + 2 NH4(+). It participates in nitrogen metabolism; urea degradation; CO(2) and NH(3) from urea (urease route): step 1/1. This is Urease subunit alpha from Bradyrhizobium diazoefficiens (strain JCM 10833 / BCRC 13528 / IAM 13628 / NBRC 14792 / USDA 110).